We begin with the raw amino-acid sequence, 407 residues long: MDINKPGWNQSDQQATAYDPNQQQYYGDGSTYYDPDQAVDPNQAYYPDPNTYPDAAAYYGYGQDGQAYPQDYAQDPNQAYYADPNAYQDPNAYTDPNAYVDPNAYQDPNAYVDPNNYTDPNAYYGYGQDGQAYPQDYAQDPNQAYYAYVDPNAYQDPNAYTDPYYVTSTDHNAYYGQVDNVPALEASDLAYEVTPQEQAAEQELFSEPETKVIREIHEFPFEKIRSYFQTDFDSYNSRLTQLKDKLDNAIFSMRKAIDTVKENSANLQIMKQNFERQLKEQQTQRLTSNTDAEKIGAKINQLEERMQRLSRTMESVEWTKKEPRQEQFDPRFVDPRNFNNYVNNTDTMMSMFEKVLMMNLLRSTTPVQPPVQYFTPQPLTASPRPVYEEPISASFRRRGYRGDEFYE.

The interval 1-50 (MDINKPGWNQSDQQATAYDPNQQQYYGDGSTYYDPDQAVDPNQAYYPDPN) is disordered. Residues 7–25 (GWNQSDQQATAYDPNQQQY) are compositionally biased toward polar residues. 12 repeat units span residues 40–45 (DPNQAY), 75–80 (DPNQAY), 83–87 (DPNAY), 89–93 (DPNAY), 95–99 (DPNAY), 101–105 (DPNAY), 107–111 (DPNAY), 119–123 (DPNAY), 140–145 (DPNQAY), 150–154 (DPNAY), 156–160 (DPNAY), and 170–174 (DHNAY). The 12 X 5 AA repeats of D-P-N-Q-A-Y stretch occupies residues 40–174 (DPNQAYYPDP…YVTSTDHNAY (135 aa)).

The N-terminus is blocked.

Its subcellular location is the cell membrane. The polypeptide is Proline-rich P65 protein (p65) (Mycoplasmoides pneumoniae (strain ATCC 15531 / DSM 23978 / CIP 103766 / NBRC 14401 / NCTC 10119 / FH) (Mycoplasma pneumoniae)).